Consider the following 432-residue polypeptide: Trigger factor (432 aa).

Positions 163–248 (GDIAVIDFEG…LKALNKKELP (86 aa)) constitute a PPIase FKBP-type domain.

It belongs to the FKBP-type PPIase family. Tig subfamily.

It is found in the cytoplasm. It catalyses the reaction [protein]-peptidylproline (omega=180) = [protein]-peptidylproline (omega=0). Its function is as follows. Involved in protein export. Acts as a chaperone by maintaining the newly synthesized protein in an open conformation. Functions as a peptidyl-prolyl cis-trans isomerase. This is Trigger factor from Caldanaerobacter subterraneus subsp. tengcongensis (strain DSM 15242 / JCM 11007 / NBRC 100824 / MB4) (Thermoanaerobacter tengcongensis).